The sequence spans 581 residues: Activating signal cointegrator 1 (581 aa).

Ala-2 bears the N-acetylalanine mark. The segment at 97 to 118 (KSGDHLKRGRKKGRNRQEVPAF) is disordered. The C4-type zinc finger occupies 171–187 (CDCLGQKHKLINNCLIC). Positions 200-300 (CLFCGTLVCT…ASDSNQWLSK (101 aa)) are mediates interaction with DDRGK1. Ser-276 carries the phosphoserine modification. A Phosphotyrosine modification is found at Tyr-289. The mediates interaction with UFL1 stretch occupies residues 300-400 (KLERETLQKR…WVDHTGAASQ (101 aa)). Residues Lys-324, Lys-325, and Lys-334 each participate in a glycyl lysine isopeptide (Lys-Gly) (interchain with G-Cter in UFM1) cross-link. Ser-341 carries the post-translational modification Phosphoserine. A Glycyl lysine isopeptide (Lys-Gly) (interchain with G-Cter in UFM1) cross-link involves residue Lys-367. An ASCH domain is found at 437–531 (LSVHQPWASL…FKEQFPDISQ (95 aa)).

In terms of assembly, interacts with the thyroid hormone receptor/TR (via the ligand-binding domain); this interaction requires the presence of thyroid hormone. Interacts with the androgen receptor/AR; in an androgen, testosterone and dihydrotestosterone-dependent manner. Interacts with ESR1 (estrogen ligand-bound); competes with UFSP2. Interacts with UFSP2; competes with ligand-bound ESR1. Interacts with DDRGK1 and UFL1; the interaction with DDRGK1 is direct. Interacts with NCOA1. Interacts with EP300. Part of the ASC-1 complex, that contains TRIP4, ASCC1, ASCC2 and ASCC3. Identified in the RQT (ribosome quality control trigger) complex, that contains ASCC2, ASCC3 and TRIP4. Interacts with NEK6. Interacts with CSRP1. Interacts with ZCCHC4. Post-translationally, phosphorylated by NEK6. Polyufmylated by the UFM1-conjugating system composed of the enzymes UBA5, UFC1 and UFL1. Deufmylated by the protease UFSP2. Ufmylation of TRIP4 is promoted by ligand-bound nuclear receptors that compete with UFSP2 for interaction with TRIP4. Nuclear receptors-induced ufmylation promotes the recruitment of additional transcriptional coactivators like EP300 and NCOA1 and therefore the assembly of a coactivator complex facilitating nuclear receptor-mediated transcription.

It localises to the nucleus. Its subcellular location is the cytoplasm. The protein localises to the cytosol. The protein resides in the cytoskeleton. It is found in the microtubule organizing center. It localises to the centrosome. Functionally, transcription coactivator which associates with nuclear receptors, transcriptional coactivators including EP300, CREBBP and NCOA1, and basal transcription factors like TBP and TFIIA to facilitate nuclear receptors-mediated transcription. May thereby play an important role in establishing distinct coactivator complexes under different cellular conditions. Plays a role in thyroid hormone receptor and estrogen receptor transactivation. Also involved in androgen receptor transactivation. Plays a pivotal role in the transactivation of NF-kappa-B, SRF and AP1. Acts as a mediator of transrepression between nuclear receptor and either AP1 or NF-kappa-B. May play a role in the development of neuromuscular junction. May play a role in late myogenic differentiation. Also functions as part of the RQC trigger (RQT) complex that activates the ribosome quality control (RQC) pathway, a pathway that degrades nascent peptide chains during problematic translation. In Homo sapiens (Human), this protein is Activating signal cointegrator 1.